The sequence spans 381 residues: Succinyl-diaminopimelate desuccinylase (381 aa).

Position 69 (histidine 69) interacts with Zn(2+). Residue aspartate 71 is part of the active site. A Zn(2+)-binding site is contributed by aspartate 103. The Proton acceptor role is filled by glutamate 137. Zn(2+) contacts are provided by glutamate 138, glutamate 166, and histidine 355.

It belongs to the peptidase M20A family. DapE subfamily. Homodimer. Requires Zn(2+) as cofactor. The cofactor is Co(2+).

The catalysed reaction is N-succinyl-(2S,6S)-2,6-diaminopimelate + H2O = (2S,6S)-2,6-diaminopimelate + succinate. It participates in amino-acid biosynthesis; L-lysine biosynthesis via DAP pathway; LL-2,6-diaminopimelate from (S)-tetrahydrodipicolinate (succinylase route): step 3/3. Its function is as follows. Catalyzes the hydrolysis of N-succinyl-L,L-diaminopimelic acid (SDAP), forming succinate and LL-2,6-diaminopimelate (DAP), an intermediate involved in the bacterial biosynthesis of lysine and meso-diaminopimelic acid, an essential component of bacterial cell walls. This chain is Succinyl-diaminopimelate desuccinylase, found in Rickettsia rickettsii (strain Iowa).